The following is a 665-amino-acid chain: Fermitin family homolog 3 (665 aa).

Residue Tyr-11 is modified to Phosphotyrosine. One can recognise an FERM domain in the interval 229 to 556 (WLDSSRCLMQ…SLPDFGISYV (328 aa)). In terms of domain architecture, PH spans 354–453 (DHLRIFRPRK…WMAGCRLASK (100 aa)). Tyr-502 is subject to Phosphotyrosine. Thr-589 carries the phosphothreonine modification.

The protein belongs to the kindlin family. In terms of assembly, interacts with ITGB1, ITGB2 and ITGB3 (via cytoplasmic tails).

The protein resides in the cell projection. Its subcellular location is the podosome. In terms of biological role, plays a central role in cell adhesion in hematopoietic cells. Acts by activating the integrin beta-1-3 (ITGB1, ITGB2 and ITGB3). Required for integrin-mediated platelet adhesion and leukocyte adhesion to endothelial cells. Required for activation of integrin beta-2 (ITGB2) in polymorphonuclear granulocytes (PMNs). This chain is Fermitin family homolog 3 (FERMT3), found in Bos taurus (Bovine).